Here is a 146-residue protein sequence, read N- to C-terminus: Large ribosomal subunit protein uL15 (146 aa).

Basic and acidic residues predominate over residues 1–10 (MKLHELKPAE). Residues 1 to 51 (MKLHELKPAEGSRQVRNRVGRGTSSGNGKTAGRGQKGQKARSGGGVRLGFE) are disordered. 2 stretches are compositionally biased toward gly residues: residues 23-35 (TSSG…GRGQ) and 42-51 (SGGGVRLGFE).

The protein belongs to the universal ribosomal protein uL15 family. Part of the 50S ribosomal subunit.

Its function is as follows. Binds to the 23S rRNA. This is Large ribosomal subunit protein uL15 from Enterococcus faecalis (strain ATCC 700802 / V583).